The primary structure comprises 59 residues: Large ribosomal subunit protein uL30 (59 aa).

The protein belongs to the universal ribosomal protein uL30 family. Part of the 50S ribosomal subunit.

This chain is Large ribosomal subunit protein uL30, found in Staphylococcus aureus (strain JH1).